A 434-amino-acid polypeptide reads, in one-letter code: Zinc finger protein Pegasus (434 aa).

The interval 33–57 (VSSDKEAETLQGAGTDSDQNGLDHP) is disordered. 3 consecutive C2H2-type zinc fingers follow at residues 82–104 (LKCR…IRIH), 110–132 (HRCH…MRSH), and 138–161 (YKCE…RRKH). A compositionally biased stretch (polar residues) spans 260-274 (GQLSSLPPDTQNPAS). A disordered region spans residues 260 to 357 (GQLSSLPPDT…PSTPAPALPA (98 aa)). Low complexity predominate over residues 296 to 313 (CASAVSTSVAQSSSPASP). Positions 337–349 (RTSTPSISNSQPS) are enriched in polar residues. C2H2-type zinc fingers lie at residues 364–386 (HHCQ…MGCH) and 392–419 (FQCN…CCQH).

Belongs to the Ikaros C2H2-type zinc-finger protein family. In terms of assembly, probably self-associates.

It localises to the nucleus. Transcriptional repressor that binds the core 5'GNNTGTNG-3' DNA consensus sequence. The protein is Zinc finger protein Pegasus (ikzf5) of Xenopus tropicalis (Western clawed frog).